Consider the following 284-residue polypeptide: Pantothenate synthetase (284 aa).

ATP is bound at residue 30-37 (MGALHDGH). Catalysis depends on His37, which acts as the Proton donor. Gln61 contacts (R)-pantoate. Gln61 is a beta-alanine binding site. Position 147-150 (147-150 (GEKD)) interacts with ATP. (R)-pantoate is bound at residue Gln153. ATP-binding positions include Val176 and 184–187 (KSSR).

It belongs to the pantothenate synthetase family. As to quaternary structure, homodimer.

The protein resides in the cytoplasm. It carries out the reaction (R)-pantoate + beta-alanine + ATP = (R)-pantothenate + AMP + diphosphate + H(+). It participates in cofactor biosynthesis; (R)-pantothenate biosynthesis; (R)-pantothenate from (R)-pantoate and beta-alanine: step 1/1. Its function is as follows. Catalyzes the condensation of pantoate with beta-alanine in an ATP-dependent reaction via a pantoyl-adenylate intermediate. In Chloroherpeton thalassium (strain ATCC 35110 / GB-78), this protein is Pantothenate synthetase.